The primary structure comprises 97 residues: Large ribosomal subunit protein bL28 (97 aa).

The protein belongs to the bacterial ribosomal protein bL28 family.

In Nitrobacter winogradskyi (strain ATCC 25391 / DSM 10237 / CIP 104748 / NCIMB 11846 / Nb-255), this protein is Large ribosomal subunit protein bL28.